A 1399-amino-acid polypeptide reads, in one-letter code: DNA-directed RNA polymerase subunit beta' (1399 aa).

Zn(2+) is bound by residues Cys-71, Cys-73, Cys-86, and Cys-89. Asp-462, Asp-464, and Asp-466 together coordinate Mg(2+). Positions 810, 884, 891, and 894 each coordinate Zn(2+). The disordered stretch occupies residues 1379-1399; sequence KQAAIVPSQPEPQPLALPPAE. Pro residues predominate over residues 1387 to 1399; sequence QPEPQPLALPPAE.

The protein belongs to the RNA polymerase beta' chain family. As to quaternary structure, the RNAP catalytic core consists of 2 alpha, 1 beta, 1 beta' and 1 omega subunit. When a sigma factor is associated with the core the holoenzyme is formed, which can initiate transcription. Mg(2+) is required as a cofactor. It depends on Zn(2+) as a cofactor.

The enzyme catalyses RNA(n) + a ribonucleoside 5'-triphosphate = RNA(n+1) + diphosphate. In terms of biological role, DNA-dependent RNA polymerase catalyzes the transcription of DNA into RNA using the four ribonucleoside triphosphates as substrates. This is DNA-directed RNA polymerase subunit beta' from Bradyrhizobium sp. (strain BTAi1 / ATCC BAA-1182).